Here is a 505-residue protein sequence, read N- to C-terminus: Keratin, type II cuticular Hb1 (505 aa).

Residues 1–106 (MTCGSGFGGR…PNAQCVKQEE (106 aa)) are head. An IF rod domain is found at 106 to 417 (EKEQIKSLNS…RLLEGEEQRL (312 aa)). A coil 1A region spans residues 107–141 (KEQIKSLNSRFAAFIDKVRFLEQQNKLLETKLQFY). The segment at 142-151 (QNRECCQSNL) is linker 1. The tract at residues 152 to 252 (EPLFEGYIET…YEEEILILQS (101 aa)) is coil 1B. Lysine 212 participates in a covalent cross-link: Glycyl lysine isopeptide (Lys-Gly) (interchain with G-Cter in SUMO1). The tract at residues 253–269 (HISDTSVVVKLDNSRDL) is linker 12. A coil 2 region spans residues 270–413 (NMDCIIAEIK…ATYRRLLEGE (144 aa)). The interval 414–505 (EQRLCEGIGA…GSCGSSCRKC (92 aa)) is tail.

Belongs to the intermediate filament family. In terms of assembly, heterotetramer of two type I and two type II keratins. As to expression, abundantly expressed in the differentiating cortex of growing (anagen) hair. Expression is restricted to the keratinocytes of the hair cortex and is absent from inner root sheath and medulla. Expressed in malignant lymph node tissue in breast carcinoma tissue.

In Homo sapiens (Human), this protein is Keratin, type II cuticular Hb1 (KRT81).